The primary structure comprises 21 residues: Apolipophorin 2 (21 aa).

Expressed in hemolymph.

Its subcellular location is the secreted. Constitutes the major component of lipophorin, which mediates transport for various types of lipids in hemolymph. Acts by forming lipoprotein particles that bind lipoproteins and lipids. This is Apolipophorin 2 from Galleria mellonella (Greater wax moth).